The following is a 137-amino-acid chain: MERTLSIIKPDAVAKGVVGKILDRFESNGLKIAATRKMQLSRADAEAFYAVHSERPFFGDLVDFMISGPVVVSVLEGEGALIKNRNLMGATNPKEAEAGTIRADFAENIDANAVHGSDSLENAAVEIAFFFSEREIS.

K9, F57, R85, T91, R102, and N112 together coordinate ATP. H115 (pros-phosphohistidine intermediate) is an active-site residue.

It belongs to the NDK family. As to quaternary structure, homotetramer. The cofactor is Mg(2+).

Its subcellular location is the cytoplasm. The catalysed reaction is a 2'-deoxyribonucleoside 5'-diphosphate + ATP = a 2'-deoxyribonucleoside 5'-triphosphate + ADP. It catalyses the reaction a ribonucleoside 5'-diphosphate + ATP = a ribonucleoside 5'-triphosphate + ADP. Major role in the synthesis of nucleoside triphosphates other than ATP. The ATP gamma phosphate is transferred to the NDP beta phosphate via a ping-pong mechanism, using a phosphorylated active-site intermediate. The chain is Nucleoside diphosphate kinase from Sulfurimonas denitrificans (strain ATCC 33889 / DSM 1251) (Thiomicrospira denitrificans (strain ATCC 33889 / DSM 1251)).